We begin with the raw amino-acid sequence, 245 residues long: Ubiquinone/menaquinone biosynthesis C-methyltransferase UbiE (245 aa).

Residues threonine 71, aspartate 92, and 118-119 contribute to the S-adenosyl-L-methionine site; that span reads DA.

This sequence belongs to the class I-like SAM-binding methyltransferase superfamily. MenG/UbiE family.

It catalyses the reaction a 2-demethylmenaquinol + S-adenosyl-L-methionine = a menaquinol + S-adenosyl-L-homocysteine + H(+). The enzyme catalyses a 2-methoxy-6-(all-trans-polyprenyl)benzene-1,4-diol + S-adenosyl-L-methionine = a 5-methoxy-2-methyl-3-(all-trans-polyprenyl)benzene-1,4-diol + S-adenosyl-L-homocysteine + H(+). The protein operates within quinol/quinone metabolism; menaquinone biosynthesis; menaquinol from 1,4-dihydroxy-2-naphthoate: step 2/2. Its pathway is cofactor biosynthesis; ubiquinone biosynthesis. In terms of biological role, methyltransferase required for the conversion of demethylmenaquinol (DMKH2) to menaquinol (MKH2) and the conversion of 2-polyprenyl-6-methoxy-1,4-benzoquinol (DDMQH2) to 2-polyprenyl-3-methyl-6-methoxy-1,4-benzoquinol (DMQH2). The sequence is that of Ubiquinone/menaquinone biosynthesis C-methyltransferase UbiE from Neisseria meningitidis serogroup C (strain 053442).